Reading from the N-terminus, the 144-residue chain is Peroxisome assembly protein 22 (144 aa).

The chain crosses the membrane as a helical span at residues Tyr-13–Ala-35.

This sequence belongs to the peroxin-22 family.

Its subcellular location is the peroxisome membrane. Functionally, involved in peroxisome biogenesis. The protein is Peroxisome assembly protein 22 (PEX22) of Eremothecium gossypii (strain ATCC 10895 / CBS 109.51 / FGSC 9923 / NRRL Y-1056) (Yeast).